A 394-amino-acid polypeptide reads, in one-letter code: Flavohemoprotein (394 aa).

One can recognise a Globin domain in the interval 1 to 136 (MISQQTIDIV…LANVFITREE (136 aa)). His85 lines the heme b pocket. Residues Tyr95 and Glu135 each act as charge relay system in the active site. The interval 147–394 (GGWRGTREFT…YECFGPHKVL (248 aa)) is reductase. The region spanning 150 to 255 (RGTREFTLIE…AAPAGDFFLD (106 aa)) is the FAD-binding FR-type domain. Residues Tyr188 and 204–207 (RQYS) contribute to the FAD site. Position 268–273 (268–273 (GVGLTP)) interacts with NADP(+). 387–390 (CFGP) is an FAD binding site.

The protein belongs to the globin family. Two-domain flavohemoproteins subfamily. It in the C-terminal section; belongs to the flavoprotein pyridine nucleotide cytochrome reductase family. Requires heme b as cofactor. The cofactor is FAD.

The enzyme catalyses 2 nitric oxide + NADPH + 2 O2 = 2 nitrate + NADP(+) + H(+). It catalyses the reaction 2 nitric oxide + NADH + 2 O2 = 2 nitrate + NAD(+) + H(+). Its function is as follows. Is involved in NO detoxification in an aerobic process, termed nitric oxide dioxygenase (NOD) reaction that utilizes O(2) and NAD(P)H to convert NO to nitrate, which protects the bacterium from various noxious nitrogen compounds. Therefore, plays a central role in the inducible response to nitrosative stress. The protein is Flavohemoprotein of Photobacterium profundum (strain SS9).